Consider the following 234-residue polypeptide: Adenosine 5'-phosphosulfate reductase (234 aa).

[4Fe-4S] cluster is bound by residues Cys120, Cys121, Cys203, and Cys206. The active-site Nucleophile; cysteine thiosulfonate intermediate is Cys229.

Belongs to the PAPS reductase family. CysH subfamily. Requires [4Fe-4S] cluster as cofactor.

The protein resides in the cytoplasm. The enzyme catalyses [thioredoxin]-disulfide + sulfite + AMP + 2 H(+) = adenosine 5'-phosphosulfate + [thioredoxin]-dithiol. It participates in sulfur metabolism; hydrogen sulfide biosynthesis; sulfite from sulfate. In terms of biological role, catalyzes the formation of sulfite from adenosine 5'-phosphosulfate (APS) using thioredoxin as an electron donor. This chain is Adenosine 5'-phosphosulfate reductase, found in Bacillus cereus (strain 03BB102).